The primary structure comprises 488 residues: Multidrug resistance outer membrane protein MdtP (488 aa).

A signal peptide spans Met-1–Gly-23. The N-palmitoyl cysteine moiety is linked to residue Cys-24. The S-diacylglycerol cysteine moiety is linked to residue Cys-24.

This sequence belongs to the outer membrane factor (OMF) (TC 1.B.17) family. Could be part of a tripartite efflux system composed of MdtN, MdtO and MdtP.

The protein localises to the cell outer membrane. Could be involved in resistance to puromycin, acriflavine and tetraphenylarsonium chloride. In Escherichia coli O157:H7, this protein is Multidrug resistance outer membrane protein MdtP (mdtP).